A 237-amino-acid polypeptide reads, in one-letter code: Oligoribonuclease, mitochondrial (237 aa).

Residues 1–25 (MLGGSLGSRLLRGVGGSHGRFGARG) constitute a mitochondrion transit peptide. Residues 43–207 (MVWVDLEMTG…DDISESIKEL (165 aa)) enclose the Exonuclease domain. Mg(2+)-binding residues include Asp-47 and Glu-49. At Ser-92 the chain carries Phosphoserine. Tyr-122 is modified (phosphotyrosine). Asp-147 is a binding site for Mg(2+). Lys-173 is subject to N6-acetyllysine. His-194 is an active-site residue. Asp-199 provides a ligand contact to Mg(2+).

The protein belongs to the oligoribonuclease family. In terms of assembly, homodimer. Homotetramer. Requires Mn(2+) as cofactor. It depends on Mg(2+) as a cofactor. In terms of tissue distribution, highly expressed in the heart and at lower levels in the lymph nodes, brain, lung, liver, spleen and thymus.

Its subcellular location is the mitochondrion intermembrane space. It is found in the mitochondrion matrix. The protein localises to the mitochondrion. The protein resides in the cytoplasm. It localises to the nucleus. Its activity is regulated as follows. Inhibited by adenosine 3',5'-bisphosphate. Its function is as follows. 3'-to-5'exoribonuclease that preferentially degrades DNA and RNA oligonucleotides composed of only two nucleotides. Binds and degrades longer oligonucleotides with a lower affinity. Plays dual roles in mitochondria, scavenging nanoRNAs (small RNA oligonucleotides of &lt;5 nucleotides) that are produced by the degradosome and clearing short RNAs that are generated by RNA processing. Essential for correct initiation of mitochondrial transcription, degrading mitochondrial RNA dinucleotides to prevent RNA-primed transcription at non-canonical sites in the mitochondrial genome. Essential for embryonic development. 3'-to-5'exoribonuclease that preferentially degrades DNA and RNA oligonucleotides composed of only two nucleotides. The sequence is that of Oligoribonuclease, mitochondrial (REXO2) from Homo sapiens (Human).